The sequence spans 510 residues: Maturase K (510 aa).

The protein belongs to the intron maturase 2 family. MatK subfamily.

The protein resides in the plastid. It is found in the chloroplast. Functionally, usually encoded in the trnK tRNA gene intron. Probably assists in splicing its own and other chloroplast group II introns. This chain is Maturase K, found in Penstemon heterophyllus (Foothill penstemon).